The primary structure comprises 433 residues: Homoserine O-acetyltransferase (433 aa).

Residues 41-385 (NVVLVCHALT…HGHDAFLVEP (345 aa)) enclose the AB hydrolase-1 domain. The tract at residues 55–74 (VARSPAPERNEGTRGAGQAG) is disordered. Ser166 functions as the Nucleophile in the catalytic mechanism. Arg237 contacts substrate. Residues Asp345 and His378 contribute to the active site. Position 379 (Asp379) interacts with substrate. Positions 403–433 (RAVSDDGGGGGNDSARPERDHAPVHASLFKG) are disordered.

It belongs to the AB hydrolase superfamily. MetX family. Homodimer.

The protein resides in the cytoplasm. It carries out the reaction L-homoserine + acetyl-CoA = O-acetyl-L-homoserine + CoA. It participates in amino-acid biosynthesis; L-methionine biosynthesis via de novo pathway; O-acetyl-L-homoserine from L-homoserine: step 1/1. Transfers an acetyl group from acetyl-CoA to L-homoserine, forming acetyl-L-homoserine. The chain is Homoserine O-acetyltransferase from Halorubrum lacusprofundi (strain ATCC 49239 / DSM 5036 / JCM 8891 / ACAM 34).